Here is a 289-residue protein sequence, read N- to C-terminus: Toxin tox21A (289 aa).

Positions 1 to 14 (MNLYFLFFISTILA) are cleaved as a signal peptide. Positions 15-27 (AKPFNSFNKTSLI) are excised as a propeptide. Residues 270-289 (DKDITVHENAGDPKSDSRRC) are disordered.

Contains several disulfide bonds. As to expression, posterior glands which appear to be connected with the stylet through a series of ducts.

It localises to the secreted. Its function is as follows. Has contracting-paralyzing activity in insect larvae. The chain is Toxin tox21A from Pyemotes tritici (Straw itch mite).